The chain runs to 268 residues: Mediator of RNA polymerase II transcription subunit 18 (268 aa).

Positions 91 to 112 are disordered; it reads APASPVADQDAHMSGTDEKSSV. Residues 99-112 show a composition bias toward basic and acidic residues; it reads QDAHMSGTDEKSSV.

Belongs to the Mediator complex subunit 18 family. In terms of assembly, component of the Mediator complex.

It is found in the nucleus. Its function is as follows. Component of the Mediator complex, a coactivator involved in the regulated transcription of nearly all RNA polymerase II-dependent genes. Mediator functions as a bridge to convey information from gene-specific regulatory proteins to the basal RNA polymerase II transcription machinery. Mediator is recruited to promoters by direct interactions with regulatory proteins and serves as a scaffold for the assembly of a functional preinitiation complex with RNA polymerase II and the general transcription factors. The sequence is that of Mediator of RNA polymerase II transcription subunit 18 (srb5) from Aspergillus fumigatus (strain ATCC MYA-4609 / CBS 101355 / FGSC A1100 / Af293) (Neosartorya fumigata).